Consider the following 183-residue polypeptide: Ras-related protein Rap-2a (183 aa).

10–17 (GSGGVGKS) contacts GTP. An Effector region motif is present at residues 32–40 (YDPTIEDFY). T35 carries a (Microbial infection) O-linked (Glc) threonine; by C.difficile toxin TcdA, and by P.sordellii toxin TcsL glycan. GTP-binding positions include 57-61 (DTAGT) and 116-119 (NKVD). Residues C176 and C177 are each lipidated (S-palmitoyl cysteine). A Cysteine methyl ester modification is found at C180. C180 is lipidated: S-farnesyl cysteine. Positions 181-183 (NIQ) are cleaved as a propeptide — removed in mature form.

Belongs to the small GTPase superfamily. Ras family. In terms of assembly, interacts (GTP-bound form) with RUNDC3A. Interacts with RGS14; the interaction is GTP-dependent. Interacts with PLCE1. Interacts with ARHGAP29, SGSM1, SGSM2 and SGSM3. Interacts (GTP-bound form preferentially) with TNIK (via the CNH domain); the interaction is direct and recruits RAP2A to the E3 ubiquitin ligase NEDD4. Interacts with MINK1. Interacts (GTP-bound form preferentially) with MAP4K4. Interacts with cytoskeletal actin. Ubiquitinated; undergoes 'Lys-63' monoubiquitination and diubiquitination by NEDD4. Multiple lysine residues are probably modified. Ubiquitination requires TNIK, prevents interaction with effectors and inactivates RAP2A. Ubiquitination by the ECS(RAB40B) complex leads to RAP2A localization to lamellipodia plasma membrane, activation, and regulation of sorting at early endosomes for recycling to the lamellipodia plasma membrane. In terms of processing, palmitoylated. Palmitoylation is required for association with recycling endosome membranes and activation of TNIK. Post-translationally, (Microbial infection) Glucosylated at Thr-35 by C.difficile toxin TcdA in the colonic epithelium, and by P.sordellii toxin TcsL in the vascular endothelium.

The protein localises to the midbody. The protein resides in the cell projection. Its subcellular location is the lamellipodium membrane. It localises to the golgi apparatus. It is found in the recycling endosome membrane. The protein localises to the lysosome. It catalyses the reaction GTP + H2O = GDP + phosphate + H(+). Its activity is regulated as follows. Activated by the guanine nucleotide-exchange factors RAPGEF3 and RAPGEF4 in a cAMP-dependent manner. Nucleotide exchange is also specifically stimulated by RAPGEF5, RASGEF1A and RASGEF1B. Functionally, small GTP-binding protein which cycles between a GDP-bound inactive and a GTP-bound active form. In its active form interacts with and regulates several effectors including MAP4K4, MINK1 and TNIK. Part of a signaling complex composed of NEDD4, RAP2A and TNIK which regulates neuronal dendrite extension and arborization during development. More generally, it is part of several signaling cascades and regulates cytoskeletal rearrangements, cell migration, cell adhesion and cell spreading. The chain is Ras-related protein Rap-2a from Homo sapiens (Human).